The sequence spans 96 residues: MGCRDILLTFSVALLLISLFQIWLFREGRQVPELSDDQLGKDRNTLMTSKNKNKNEDVQRLFQRYFKGRSFGLNNTNSRFEDSNRRIPSSPDRLHN.

Residues 1–28 form the signal peptide; that stretch reads MGCRDILLTFSVALLLISLFQIWLFREG. The tract at residues 71–96 is disordered; that stretch reads FGLNNTNSRFEDSNRRIPSSPDRLHN. An N-linked (GlcNAc...) asparagine glycan is attached at asparagine 74. Hydroxyproline occurs at positions 88 and 91. The O-linked (Ara...) hydroxyproline glycan is linked to proline 91.

This sequence belongs to the CLV3/ESR signal peptide family. Post-translationally, the O-glycosylation (arabinosylation) of the hydroxyproline Pro-91 enhances binding affinity of the CLE43p peptide for its receptor. As to expression, expressed at low levels in seedlings.

It is found in the secreted. It localises to the extracellular space. Its function is as follows. Extracellular signal peptide that regulates cell fate. Promotes pollen tube growth prolongation in a SKM1 and SKM2-dependent manner, especially under relatively high temperature (at 30 degrees Celsius), thus conferring tolerance against high temperature probably through the maintenance of mitochondrial activity. The protein is CLAVATA3/ESR (CLE)-related protein 43 of Arabidopsis thaliana (Mouse-ear cress).